The primary structure comprises 197 residues: MTNVPTDDGPWLVVGLGNPGPGYAGNRHNAGFMVVDLLAERAGSRLKSHRSRADVAEVRLAGTRAILARPLSFMNLSGGPVSAVRTFYKIDPARVIVVHDELDIPFGSVRLKRGGGDNGHNGLRSISSALGTRDYLRVRVGIGRPPGRMDPADYVLRDFAAAERRELPLLLEHSADSVEMLITDGLEPTQNRYHALL.

A tRNA-binding site is contributed by tyrosine 23. Catalysis depends on histidine 28, which acts as the Proton acceptor. TRNA-binding residues include phenylalanine 73, asparagine 75, and asparagine 121.

This sequence belongs to the PTH family. In terms of assembly, monomer.

It is found in the cytoplasm. The catalysed reaction is an N-acyl-L-alpha-aminoacyl-tRNA + H2O = an N-acyl-L-amino acid + a tRNA + H(+). Hydrolyzes ribosome-free peptidyl-tRNAs (with 1 or more amino acids incorporated), which drop off the ribosome during protein synthesis, or as a result of ribosome stalling. Functionally, catalyzes the release of premature peptidyl moieties from peptidyl-tRNA molecules trapped in stalled 50S ribosomal subunits, and thus maintains levels of free tRNAs and 50S ribosomes. The polypeptide is Peptidyl-tRNA hydrolase (Frankia alni (strain DSM 45986 / CECT 9034 / ACN14a)).